The primary structure comprises 256 residues: Imidazole glycerol phosphate synthase subunit HisF (256 aa).

Active-site residues include Asp-12 and Asp-131.

The protein belongs to the HisA/HisF family. Heterodimer of HisH and HisF.

It is found in the cytoplasm. It catalyses the reaction 5-[(5-phospho-1-deoxy-D-ribulos-1-ylimino)methylamino]-1-(5-phospho-beta-D-ribosyl)imidazole-4-carboxamide + L-glutamine = D-erythro-1-(imidazol-4-yl)glycerol 3-phosphate + 5-amino-1-(5-phospho-beta-D-ribosyl)imidazole-4-carboxamide + L-glutamate + H(+). Its pathway is amino-acid biosynthesis; L-histidine biosynthesis; L-histidine from 5-phospho-alpha-D-ribose 1-diphosphate: step 5/9. IGPS catalyzes the conversion of PRFAR and glutamine to IGP, AICAR and glutamate. The HisF subunit catalyzes the cyclization activity that produces IGP and AICAR from PRFAR using the ammonia provided by the HisH subunit. In Stutzerimonas stutzeri (strain A1501) (Pseudomonas stutzeri), this protein is Imidazole glycerol phosphate synthase subunit HisF.